Reading from the N-terminus, the 360-residue chain is Phosphoserine aminotransferase (360 aa).

An L-glutamate-binding site is contributed by arginine 42. Pyridoxal 5'-phosphate contacts are provided by residues 76-77 (AS), tryptophan 102, threonine 152, aspartate 172, and glutamine 195. N6-(pyridoxal phosphate)lysine is present on lysine 196. Residue 237-238 (NT) participates in pyridoxal 5'-phosphate binding.

The protein belongs to the class-V pyridoxal-phosphate-dependent aminotransferase family. SerC subfamily. Homodimer. It depends on pyridoxal 5'-phosphate as a cofactor.

Its subcellular location is the cytoplasm. It carries out the reaction O-phospho-L-serine + 2-oxoglutarate = 3-phosphooxypyruvate + L-glutamate. It catalyses the reaction 4-(phosphooxy)-L-threonine + 2-oxoglutarate = (R)-3-hydroxy-2-oxo-4-phosphooxybutanoate + L-glutamate. Its pathway is amino-acid biosynthesis; L-serine biosynthesis; L-serine from 3-phospho-D-glycerate: step 2/3. Functionally, catalyzes the reversible conversion of 3-phosphohydroxypyruvate to phosphoserine and of 3-hydroxy-2-oxo-4-phosphonooxybutanoate to phosphohydroxythreonine. The chain is Phosphoserine aminotransferase from Bacillus cereus (strain ATCC 14579 / DSM 31 / CCUG 7414 / JCM 2152 / NBRC 15305 / NCIMB 9373 / NCTC 2599 / NRRL B-3711).